The chain runs to 506 residues: Histidine ammonia-lyase (506 aa).

The 5-imidazolinone (Ala-Gly) cross-link spans Ala143–Gly145. 2,3-didehydroalanine (Ser) is present on Ser144.

It belongs to the PAL/histidase family. In terms of processing, contains an active site 4-methylidene-imidazol-5-one (MIO), which is formed autocatalytically by cyclization and dehydration of residues Ala-Ser-Gly.

The protein localises to the cytoplasm. It carries out the reaction L-histidine = trans-urocanate + NH4(+). Its pathway is amino-acid degradation; L-histidine degradation into L-glutamate; N-formimidoyl-L-glutamate from L-histidine: step 1/3. This Salmonella paratyphi A (strain ATCC 9150 / SARB42) protein is Histidine ammonia-lyase.